Reading from the N-terminus, the 154-residue chain is Putative pre-16S rRNA nuclease (154 aa).

It belongs to the YqgF nuclease family.

The protein resides in the cytoplasm. In terms of biological role, could be a nuclease involved in processing of the 5'-end of pre-16S rRNA. This chain is Putative pre-16S rRNA nuclease, found in Rickettsia africae (strain ESF-5).